Here is a 675-residue protein sequence, read N- to C-terminus: MTTSHMNGHVTEESDNEVKNVDLASPEEHQKHREMAVDCPGDLGTRMMPVRRSAQLERIRQQQEDMRRRREEEGKKQELDLNSSMRLKKLAQIPPKTGIDNPIFDTEEGIVLESPHYAVKILEVEDLFSSLKHIQHTLVDSQSQEDISLLLQLVQNKDFQNAFKIHNAVTVHMNKASPPFPLISNAQDLAQEVQTVLKPVHHKEGQELTALLSAPHVQALLLAHDKVAEQEMQLEPFTDERVYESIGQYGGETVKIVRIEKARDIPLGATVRNEMDSVIISRIVKGGAAEKSGLLHEGDEVLEINGIEIRGKDVNEVFDLLSDMHGTLTFVLIPSQQIKPPPAKETVIHVKAHFDYDPSDDPYVPCRELGLSFQKGDILHIISQEDPNWWQAYREGDEDNQPLAGLVPGKSFQQQREAMKQTIEEDKEPEKSGKLWCAKKNKKKRKKVLYNANKNDDYDNEEILTYEEMSLYHQPANRKRPIILIGPQNCGQNELRQRLMNKEKDRFASAVPHTTRSRRDHEVAGRDYHFVSRQAFEADIAAGKFIEHGEFEKNLYGTSIDSVRQVINSGKICLLSLRTQSLKTLRNSDLKPYIIFIAPPSQERLRALLAKEGKNPKPEELREIIEKTREMEQNNGHYFDTAIVNSDLDKAYQELLRLINKLDTEPQWVPSSWLR.

The tract at residues 1–78 (MTTSHMNGHV…RREEEGKKQE (78 aa)) is disordered. The segment at 1-345 (MTTSHMNGHV…QQIKPPPAKE (345 aa)) is required for the correct localization of PALS1 and PATJ at cell-cell contacts and the normal formation of tight junctions and adherens junctions. 2 stretches are compositionally biased toward basic and acidic residues: residues 10–36 (VTEESDNEVKNVDLASPEEHQKHREMA) and 54–78 (AQLERIRQQQEDMRRRREEEGKKQE). Serine 14 and serine 25 each carry phosphoserine. The tract at residues 21–140 (VDLASPEEHQ…LKHIQHTLVD (120 aa)) is interaction with PARD6B. A phosphoserine mark is found at serine 83 and serine 84. L27 domains lie at 120–177 (KILE…NKAS) and 179–235 (PFPL…MQLE). The interaction with LIN7C stretch occupies residues 181–243 (PLISNAQDLA…LEPFTDERVY (63 aa)). The PDZ domain occupies 256-336 (IVRIEKARDI…TLTFVLIPSQ (81 aa)). Positions 345–417 (ETVIHVKAHF…PGKSFQQQRE (73 aa)) constitute an SH3 domain. Positions 479–660 (KRPIILIGPQ…AYQELLRLIN (182 aa)) constitute a Guanylate kinase-like domain. Residue 486–493 (GPQNCGQN) coordinates ATP.

The protein belongs to the MAGUK family. In terms of assembly, heterodimer with MPP1. Forms a heterotrimeric complex composed of PALS1, LIN7B and PATJ; the N-terminal L27 domain of PALS1 interacts with the L27 domain of PATJ and the C-terminal L27 domain of PALS1 interacts with the L27 domain of LIN7B. Component of a complex composed of PALS1, CRB1 and MPP4. Component of a complex whose core is composed of ARHGAP17, AMOT, PALS1, PATJ and PARD3/PAR3. Component of a complex composed of PALS1, CRB1 and EPB41L5. Within the complex, interacts (via HOOK domain) with EPB41L5 (via FERM domain), and interacts with CRB1 (via intracellular domain). Component of a complex composed of PALS1, MPP3 and CRB1; PALS1 acts as a bridging protein between MPP3 (via guanylate kinase-like domain) and CRB1. Component of a complex composed of CRB3, PALS1 and PATJ. As part of the Crumbs complex; interacts with WWP1, the interaction is enhanced by AMOTL2 and facilitates WWP1 localization to the plasma membrane. The Crumbs complex promotes monoubiquitination of AMOTL2 by WWP1, which activates the Hippo signaling pathway. Interacts (via PDZ domain) with PATJ (via N-terminus). Interacts with EZR. Interacts (via PDZ domain) with CRB1 (via C-terminal ERLI motif). While the PDZ domain is sufficient for interaction with CRB1, the adjacent SH3 and guanylate kinase-like domains are likely to contribute to a high affinity interaction. Interacts with WWTR1/TAZ (via WW domain). Interacts with MPP7. Interacts (via PDZ domain) with CRB3 (via C-terminus). Interacts with LIN7C. Interacts with MPDZ. Interacts with PARD6B. Interacts with SC6A1. Interacts with CDH5; the interaction promotes PALS1 localization to cell junctions and is required for CDH5-mediated vascular lumen formation and endothelial cell. Interacts with NPHP1 (via coiled coil and SH3 domains). Interacts with NPHP4. Interacts with CRB2.

It localises to the golgi apparatus. The protein resides in the cell membrane. It is found in the endomembrane system. The protein localises to the cell junction. Its subcellular location is the tight junction. It localises to the adherens junction. The protein resides in the cell projection. It is found in the axon. The protein localises to the perikaryon. Its subcellular location is the apical cell membrane. Its function is as follows. Plays a role in tight junction biogenesis and in the establishment of cell polarity in epithelial cells. Also involved in adherens junction biogenesis by ensuring correct localization of the exocyst complex protein EXOC4/SEC8 which allows trafficking of adherens junction structural component CDH1 to the cell surface. Plays a role through its interaction with CDH5 in vascular lumen formation and endothelial membrane polarity. Required during embryonic and postnatal retinal development. Required for the maintenance of cerebellar progenitor cells in an undifferentiated proliferative state, preventing premature differentiation, and is required for cerebellar histogenesis, fissure formation, cerebellar layer organization and cortical development. Plays a role in neuronal progenitor cell survival, potentially via promotion of mTOR signaling. Plays a role in the radial and longitudinal extension of the myelin sheath in Schwann cells. May modulate SC6A1/GAT1-mediated GABA uptake by stabilizing the transporter. May play a role in the T-cell receptor-mediated activation of NF-kappa-B. Required for localization of EZR to the apical membrane of parietal cells and may play a role in the dynamic remodeling of the apical cytoskeleton. Required for the normal polarized localization of the vesicular marker STX4. Required for the correct trafficking of the myelin proteins PMP22 and MAG. Involved in promoting phosphorylation and cytoplasmic retention of transcriptional coactivators YAP1 and WWTR1/TAZ which leads to suppression of TGFB1-dependent transcription of target genes such as CCN2/CTGF, SERPINE1/PAI1, SNAI1/SNAIL1 and SMAD7. The polypeptide is Protein PALS1 (Canis lupus familiaris (Dog)).